Here is a 563-residue protein sequence, read N- to C-terminus: IQCJ-SCHIP1 readthrough transcript protein (563 aa).

Residues 47–67 (ESKVKIIQRAWREYLQRQEPL) enclose the IQ domain. 4 disordered regions span residues 63–150 (RQEP…VSAL), 164–295 (VIDE…EPPV), 312–336 (FREQ…NERE), and 384–430 (SGSD…SLDD). Positions 76 to 87 (SVSSEKLSSSVS) are enriched in low complexity. The span at 88–97 (MNTFSDSSTP) shows a compositional bias: polar residues. A compositionally biased stretch (low complexity) spans 108 to 143 (SDAGSSSSSSRASSQSNSTKVTPCSECKSSSSPGGS). The segment covering 168–182 (WAPEEDGEEEEEEDE) has biased composition (acidic residues). 2 stretches are compositionally biased toward basic and acidic residues: residues 183–199 (RDQR…REPG) and 229–238 (HQHDPQDLRH). Residue Ser193 is modified to Phosphoserine. Residues 318–331 (RNQGQARTNSTSAQ) show a composition bias toward polar residues. Over residues 385–399 (GSDKDSDADDSKTET) the composition is skewed to basic and acidic residues. Positions 400–411 (SLDTPLSPMSKQ) are enriched in polar residues. The tract at residues 419–563 (DTTEEESESL…KHMAEKMPAK (145 aa)) is required for interaction with ankyrins. Over residues 420–430 (TTEEESESLDD) the composition is skewed to acidic residues. The stretch at 500–534 (IGQLQVIVNDLHSQIESLNEELVQLLLIRDELHTE) forms a coiled coil.

As to quaternary structure, homooligomer (via coiled coil domain). Interacts (via IQ domain) with calmodulin; the interaction is direct and lost in presence of calcium. Interacts with ANK3 (via ANK repeats); required for localization at axon initial segments (AIS) and nodes of Ranvier. Interacts with SPTBN4. Interacts with KCNQ2 and KCNQ3. Highly expressed in brain and to a lower extent in heart and kidney.

Its subcellular location is the cell projection. The protein localises to the axon. It is found in the cytoplasm. May play a role in action potential conduction in myelinated cells through the organization of molecular complexes at nodes of Ranvier and axon initial segments. May also play a role in axon outgrowth and guidance. This chain is IQCJ-SCHIP1 readthrough transcript protein, found in Homo sapiens (Human).